The sequence spans 204 residues: Nascent polypeptide-associated complex subunit alpha (204 aa).

Residues 1–19 (MADPRVEELPDEEVPKTNV) are compositionally biased toward basic and acidic residues. Disordered regions lie at residues 1-48 (MADP…HSRN) and 119-167 (LAAA…GLEA). The segment covering 22–32 (AGSDSESEAGE) has biased composition (acidic residues). An NAC-A/B domain is found at 46–111 (SRNEKKARKA…AKIEDLNSQA (66 aa)). Low complexity predominate over residues 119-128 (LAAAEAAAGE). The segment covering 129–151 (HAGHDHDHDHGKGKAPETEAKKE) has biased composition (basic and acidic residues). The span at 152 to 164 (EEEDDGEEVDETG) shows a compositional bias: acidic residues. The UBA domain maps to 165 to 204 (LEAKDIELVMAQANVSRKKAVKALRENDNDIVNSIMALSI).

The protein belongs to the NAC-alpha family. Part of the nascent polypeptide-associated complex (NAC), consisting of egd2 and egd1. NAC associates with ribosomes via egd1.

It is found in the cytoplasm. The protein resides in the nucleus. Component of the nascent polypeptide-associated complex (NAC), a dynamic component of the ribosomal exit tunnel, protecting the emerging polypeptides from interaction with other cytoplasmic proteins to ensure appropriate nascent protein targeting. The NAC complex also promotes mitochondrial protein import by enhancing productive ribosome interactions with the outer mitochondrial membrane and blocks the inappropriate interaction of ribosomes translating non-secretory nascent polypeptides with translocation sites in the membrane of the endoplasmic reticulum. Egd2 may also be involved in transcription regulation. This chain is Nascent polypeptide-associated complex subunit alpha (egd2), found in Aspergillus clavatus (strain ATCC 1007 / CBS 513.65 / DSM 816 / NCTC 3887 / NRRL 1 / QM 1276 / 107).